Consider the following 503-residue polypeptide: Hemogen (503 aa).

Composition is skewed to basic residues over residues 1–10 (MDMGKGRPRL) and 61–79 (KKRK…RKRQ). The tract at residues 1–129 (MDMGKGRPRL…PLVPSPTKAV (129 aa)) is disordered. Positions 7-87 (RPRLKLPQMP…RQGNVEQKAE (81 aa)) are necessary for nuclear localization. Residues Ser90, Ser103, Ser124, Ser153, Ser158, Ser171, Ser213, Ser223, Ser228, Ser241, and Ser269 each carry the phosphoserine modification. Phosphothreonine is present on Thr286. A disordered region spans residues 381–503 (QKTIQESPEP…ENGIYSSALF (123 aa)). A compositionally biased stretch (low complexity) spans 385 to 396 (QESPEPEQYSPE). Residues Ser387 and Ser394 each carry the phosphoserine modification. Residues 426–436 (CQDREEPKHSL) are compositionally biased toward basic and acidic residues.

In terms of tissue distribution, expressed in hematopoietic precursor cells. Highly expressed in bone marrow, the red pulp of the spleen and round spermatids. Weakly expressed in peripheral blood cells.

The protein resides in the nucleus. Functionally, regulates the proliferation and differentiation of hematopoietic cells. Overexpression block the TPA-induced megakaryocytic differentiation in the K562 cell model. May also prevent cell apoptosis through the activation of the nuclear factor-kappa B (NF-kB). The chain is Hemogen (Hemgn) from Mus musculus (Mouse).